The chain runs to 159 residues: Ribosome maturation factor RimP (159 aa).

The protein belongs to the RimP family.

It is found in the cytoplasm. In terms of biological role, required for maturation of 30S ribosomal subunits. The sequence is that of Ribosome maturation factor RimP from Geobacter sulfurreducens (strain ATCC 51573 / DSM 12127 / PCA).